The following is a 332-amino-acid chain: Glycerol-3-phosphate dehydrogenase [NAD(P)+] (332 aa).

NADPH-binding residues include S10, W11, K31, and K105. Residues K105, G136, and S138 each contribute to the sn-glycerol 3-phosphate site. A140 lines the NADPH pocket. Sn-glycerol 3-phosphate-binding residues include K191, D244, S254, R255, and N256. K191 serves as the catalytic Proton acceptor. R255 is a binding site for NADPH. V279 and E281 together coordinate NADPH.

The protein belongs to the NAD-dependent glycerol-3-phosphate dehydrogenase family.

The protein resides in the cytoplasm. The enzyme catalyses sn-glycerol 3-phosphate + NAD(+) = dihydroxyacetone phosphate + NADH + H(+). It catalyses the reaction sn-glycerol 3-phosphate + NADP(+) = dihydroxyacetone phosphate + NADPH + H(+). It functions in the pathway membrane lipid metabolism; glycerophospholipid metabolism. Its function is as follows. Catalyzes the reduction of the glycolytic intermediate dihydroxyacetone phosphate (DHAP) to sn-glycerol 3-phosphate (G3P), the key precursor for phospholipid synthesis. This is Glycerol-3-phosphate dehydrogenase [NAD(P)+] from Anaeromyxobacter sp. (strain K).